We begin with the raw amino-acid sequence, 419 residues long: Capsule polysaccharide modification protein LipB (419 aa).

The protein localises to the cell inner membrane. In terms of biological role, involved in the phospholipid modification of the capsular polysaccharide, a strong requirement for its translocation to the cell surface. The sequence is that of Capsule polysaccharide modification protein LipB (lipB) from Neisseria meningitidis serogroup A / serotype 4A (strain DSM 15465 / Z2491).